The sequence spans 564 residues: Potassium-transporting ATPase potassium-binding subunit (564 aa).

10 helical membrane-spanning segments follow: residues 4-24 (YDFALLLAFFVIVLLPAPWLG), 67-87 (TLALLAFNLVGFLLLFAVLLL), 135-155 (LGLTVQNFVSPATGLAVLVVL), 179-199 (LYGLLPLCLLLALLLVWQGVP), 258-278 (FEVASIILIPVALVFTFGHYV), 286-306 (AILACMLALFLIGGSTALWSE), 382-402 (AGLYGMLLFVLIAVFLAGLMI), 420-440 (LLVATLLVMPVGVLVLGAIAA), 487-507 (LMIGLAMLIGRFGYILPILAL), and 533-553 (GLLLVTILLVGGLTFLPTLAL).

Belongs to the KdpA family. As to quaternary structure, the system is composed of three essential subunits: KdpA, KdpB and KdpC.

Its subcellular location is the cell inner membrane. Part of the high-affinity ATP-driven potassium transport (or Kdp) system, which catalyzes the hydrolysis of ATP coupled with the electrogenic transport of potassium into the cytoplasm. This subunit binds the periplasmic potassium ions and delivers the ions to the membrane domain of KdpB through an intramembrane tunnel. In Pseudomonas putida (strain ATCC 47054 / DSM 6125 / CFBP 8728 / NCIMB 11950 / KT2440), this protein is Potassium-transporting ATPase potassium-binding subunit.